An 86-amino-acid chain; its full sequence is Omega-theraphotoxin-Hhn1a 1 (86 aa).

The signal sequence occupies residues 1–21 (MKSIVFVALFGLALLAVVCSA). The propeptide occupies 22–50 (SEDAHKELLKEVVRAMVVDKTDAVQAEER). Disulfide bonds link Cys52–Cys66, Cys59–Cys71, and Cys65–Cys78.

It belongs to the neurotoxin 10 (Hwtx-1) family. 17 (Hntx-9) subfamily. As to expression, expressed by the venom gland.

The protein localises to the secreted. Ion channel inhibitor. The polypeptide is Omega-theraphotoxin-Hhn1a 1 (Cyriopagopus hainanus (Chinese bird spider)).